Here is a 616-residue protein sequence, read N- to C-terminus: Chaperone protein HscA (616 aa).

The protein belongs to the heat shock protein 70 family.

Functionally, chaperone involved in the maturation of iron-sulfur cluster-containing proteins. Has a low intrinsic ATPase activity which is markedly stimulated by HscB. Involved in the maturation of IscU. This Escherichia coli O6:H1 (strain CFT073 / ATCC 700928 / UPEC) protein is Chaperone protein HscA.